The sequence spans 266 residues: Ribosome-recycling factor, chloroplastic (266 aa).

Positions 1–26 (MPPLHAVSPAAAAAPPRALSSAARVP) are enriched in low complexity. A disordered region spans residues 1–30 (MPPLHAVSPAAAAAPPRALSSAARVPQRPG). The transit peptide at 1-74 (MPPLHAVSPA…SDKRAVLRHA (74 aa)) directs the protein to the chloroplast. 2 coiled-coil regions span residues 75–109 (TIEE…NTVR) and 207–266 (VAIR…LMKI).

Belongs to the RRF family.

It localises to the plastid. The protein resides in the chloroplast. Responsible for the release of ribosomes from messenger RNA at the termination of chloroplastic protein biosynthesis. This is Ribosome-recycling factor, chloroplastic from Oryza sativa subsp. indica (Rice).